The sequence spans 121 residues: C-type natriuretic peptide 4 (121 aa).

The signal sequence occupies residues 1–22 (MNLSYLVACGLLVTFLSDKMDA). Positions 23–96 (QPLTPAQQKS…SRRHKSGSKK (74 aa)) are excised as a propeptide. A disordered region spans residues 80–109 (LLNDQPASRRHKSGSKKGGSTSRSGCFGHK). C105 and C121 are oxidised to a cystine.

It belongs to the natriuretic peptide family. In terms of tissue distribution, brain, spinal cord, spleen, heart and fin, and to a lower extent in gill and ovary.

The protein localises to the secreted. Exhibits natriuretic and vasodepressant activity. Has cGMP-stimulating activity. May help to regulate body fluid homeostasis in a variety of aquatic environments. This is C-type natriuretic peptide 4 from Oryzias latipes (Japanese rice fish).